A 109-amino-acid chain; its full sequence is Iron-sulfur cluster assembly protein CyaY (109 aa).

This sequence belongs to the frataxin family.

Functionally, involved in iron-sulfur (Fe-S) cluster assembly. May act as a regulator of Fe-S biogenesis. In Bordetella bronchiseptica (strain ATCC BAA-588 / NCTC 13252 / RB50) (Alcaligenes bronchisepticus), this protein is Iron-sulfur cluster assembly protein CyaY.